Consider the following 93-residue polypeptide: MARSIKKGPFVDAHLEAKVQAEGASSKKVIKTWSRRSTITPDFIGLTFAVHNGRKFIPVFVTENMVGHKMGEFAPTRTFFGHAADKKSKLKKK.

It belongs to the universal ribosomal protein uS19 family.

Functionally, protein S19 forms a complex with S13 that binds strongly to the 16S ribosomal RNA. This chain is Small ribosomal subunit protein uS19, found in Geotalea daltonii (strain DSM 22248 / JCM 15807 / FRC-32) (Geobacter daltonii).